The primary structure comprises 527 residues: ATP synthase subunit alpha (527 aa).

Residue 172–179 (GDRQTGKT) coordinates ATP.

Belongs to the ATPase alpha/beta chains family. F-type ATPases have 2 components, CF(1) - the catalytic core - and CF(0) - the membrane proton channel. CF(1) has five subunits: alpha(3), beta(3), gamma(1), delta(1), epsilon(1). CF(0) has three main subunits: a(1), b(2) and c(9-12). The alpha and beta chains form an alternating ring which encloses part of the gamma chain. CF(1) is attached to CF(0) by a central stalk formed by the gamma and epsilon chains, while a peripheral stalk is formed by the delta and b chains.

The protein localises to the cell inner membrane. It carries out the reaction ATP + H2O + 4 H(+)(in) = ADP + phosphate + 5 H(+)(out). In terms of biological role, produces ATP from ADP in the presence of a proton gradient across the membrane. The alpha chain is a regulatory subunit. This chain is ATP synthase subunit alpha, found in Bacteroides fragilis (strain ATCC 25285 / DSM 2151 / CCUG 4856 / JCM 11019 / LMG 10263 / NCTC 9343 / Onslow / VPI 2553 / EN-2).